Reading from the N-terminus, the 102-residue chain is uncharacterized protein (102 aa).

Positions 1–13 (PSSSQALSVPSLS) are enriched in low complexity. A disordered region spans residues 1–24 (PSSSQALSVPSLSSEKKTASPTCV).

This is an uncharacterized protein from Human cytomegalovirus (strain AD169) (HHV-5).